Reading from the N-terminus, the 315-residue chain is 2-oxoglutarate and iron-dependent oxygenase domain-containing protein 3 (315 aa).

The disordered stretch occupies residues 1–32 (MAPQRRGPPRVPEGNSAAERRHANSTKKDRLP). The Cytoplasmic segment spans residues 1–41 (MAPQRRGPPRVPEGNSAAERRHANSTKKDRLPQEAQRTWLR). Residues 18-32 (AERRHANSTKKDRLP) show a composition bias toward basic and acidic residues. A helical; Signal-anchor for type II membrane protein membrane pass occupies residues 42–62 (IVALGVSLALVTFLLWSSAGI). Residues 63 to 315 (DDDVAEVVAH…DHGIEDPVLT (253 aa)) lie on the Lumenal side of the membrane. The Fe2OG dioxygenase domain occupies 203 to 305 (KPTFFSRINS…AITIAFTCNP (103 aa)). N-linked (GlcNAc...) asparagine glycosylation is present at N211. Fe cation is bound by residues H226 and D228. The N-linked (GlcNAc...) asparagine glycan is linked to N263. H284 is a Fe cation binding site. The active site involves R294. Residue R294 participates in 2-oxoglutarate binding.

This sequence belongs to the OGFOD3 family. The cofactor is Fe(2+). It depends on L-ascorbate as a cofactor.

The protein localises to the membrane. The polypeptide is 2-oxoglutarate and iron-dependent oxygenase domain-containing protein 3 (Ogfod3) (Rattus norvegicus (Rat)).